A 336-amino-acid polypeptide reads, in one-letter code: Ketol-acid reductoisomerase (NADP(+)) (336 aa).

In terms of domain architecture, KARI N-terminal Rossmann spans 3–183 (AKMYYDRDVD…GCTKAGVLET (181 aa)). NADP(+)-binding positions include 26–29 (YGSQ), Arg49, Ser52, Ser54, and 84–87 (DEQQ). Residue His109 is part of the active site. Residue Gly135 coordinates NADP(+). The 146-residue stretch at 184–329 (TFKEETETDL…KELRDQMPFI (146 aa)) folds into the KARI C-terminal knotted domain. Residues Asp192, Glu196, Glu228, and Glu232 each contribute to the Mg(2+) site. Ser253 is a binding site for substrate.

The protein belongs to the ketol-acid reductoisomerase family. The cofactor is Mg(2+).

It carries out the reaction (2R)-2,3-dihydroxy-3-methylbutanoate + NADP(+) = (2S)-2-acetolactate + NADPH + H(+). It catalyses the reaction (2R,3R)-2,3-dihydroxy-3-methylpentanoate + NADP(+) = (S)-2-ethyl-2-hydroxy-3-oxobutanoate + NADPH + H(+). It participates in amino-acid biosynthesis; L-isoleucine biosynthesis; L-isoleucine from 2-oxobutanoate: step 2/4. Its pathway is amino-acid biosynthesis; L-valine biosynthesis; L-valine from pyruvate: step 2/4. Its function is as follows. Involved in the biosynthesis of branched-chain amino acids (BCAA). Catalyzes an alkyl-migration followed by a ketol-acid reduction of (S)-2-acetolactate (S2AL) to yield (R)-2,3-dihydroxy-isovalerate. In the isomerase reaction, S2AL is rearranged via a Mg-dependent methyl migration to produce 3-hydroxy-3-methyl-2-ketobutyrate (HMKB). In the reductase reaction, this 2-ketoacid undergoes a metal-dependent reduction by NADPH to yield (R)-2,3-dihydroxy-isovalerate. The protein is Ketol-acid reductoisomerase (NADP(+)) of Deinococcus radiodurans (strain ATCC 13939 / DSM 20539 / JCM 16871 / CCUG 27074 / LMG 4051 / NBRC 15346 / NCIMB 9279 / VKM B-1422 / R1).